Reading from the N-terminus, the 633-residue chain is Putative ankyrin repeat protein L774 (633 aa).

7 ANK repeats span residues 91-120 (IYGH…EYDP), 123-152 (NCDD…FFKI), 221-250 (NVNK…EYDF), 252-275 (TILK…ILDS), 338-367 (DYDV…DVNN), 369-393 (MTYA…TLST), and 517-546 (DNLK…NSND).

The chain is Putative ankyrin repeat protein L774 from Acanthamoeba polyphaga mimivirus (APMV).